Here is a 1163-residue protein sequence, read N- to C-terminus: NACHT, LRR and PYD domains-containing protein 5 (1163 aa).

3 stretches are compositionally biased toward basic and acidic residues: residues 1–42 (MGPP…KDQG), 56–94 (PEKE…KDQG), and 108–127 (PEKD…EQKS). The segment at 1–201 (MGPPEKESKA…TEADKDNGGD (201 aa)) is disordered. A compositionally biased stretch (polar residues) spans 128-137 (ESTMSPSENV). The segment covering 153 to 173 (ASERKMTSPENDSKSIQKDQG) has biased composition (basic and acidic residues). Residues 243-565 (HTIILHGRPG…AALYYVLEGL (323 aa)) enclose the NACHT domain. 249–256 (GRPGVGKS) provides a ligand contact to ATP. LRR repeat units follow at residues 801 to 822 (NLKY…LACE), 830 to 851 (SVET…MIST), 858 to 878 (RLKC…ISLG), 887 to 906 (LLQK…CHLL), 915 to 935 (NLTH…QQLC), 944 to 964 (ALQR…GFLA), 972 to 993 (KLTH…LLCE), 1001 to 1022 (YLQE…DLAC), 1029 to 1050 (HLKS…TLCE), 1058 to 1079 (SLRR…ALSL), and 1086 to 1107 (HLNS…KLCS).

It belongs to the NLRP family. As to quaternary structure, component of the subcortical maternal complex (SCMC), at least composed of NLRP5, KHDC3, OOEP, and TLE6. Within the complex, interacts with OOEP, KHDC3 and TLE6. The SCMC may facilitate translocation of its components between the nuclear and cytoplasmic compartments. As part of the SCMC interacts with the SCMC-associated protein ZBED3. As part of the SCMC interacts with the SCMC-associated protein CFL1/Cofilin-1. Interacts with PRKCE. Interacts with TUBB3 at cytoskeleton microtubules. Post-translationally, phosphorylated by PRKCE.

Its subcellular location is the cytoplasm. The protein resides in the cytoplasmic vesicle. It is found in the secretory vesicle. It localises to the cortical granule. The protein localises to the mitochondrion. Its subcellular location is the nucleus. The protein resides in the nucleolus. It is found in the golgi apparatus. Component of the subcortical maternal complex (SCMC), a multiprotein complex that plays a key role in early embryonic development. The SCMC complex is a structural constituent of cytoplasmic lattices, which consist in fibrous structures found in the cytoplasm of oocytes and preimplantation embryos. They are required to store maternal proteins critical for embryonic development, such as proteins that control epigenetic reprogramming of the preimplantation embryo, and prevent their degradation or activation. Required for the localization of cortical granules to the cortex of oocytes, via association with the cortical actin scaffold. Required for cortical actin clearance prior to oocyte exocytosis and prevention of polyspermy. Involved in regulating post-fertilization Ca(2+) release and endoplasmic reticulum storage (ER) storage via regulation of cellular localization. May be involved in the localization of mitochondria to the cytoplasm and perinuclear region in oocytes and early stage embryos, independent of its role in CPL formation. In Mus musculus (Mouse), this protein is NACHT, LRR and PYD domains-containing protein 5.